Consider the following 96-residue polypeptide: Basic blue protein (96 aa).

Positions 1–96 (AVYVVGGSGG…SGMKIAVNAL (96 aa)) constitute a Phytocyanin domain. Cu cation-binding residues include His39, Cys79, His84, and Met89. A disulfide bridge connects residues Cys52 and Cys85.

In Cucumis sativus (Cucumber), this protein is Basic blue protein.